We begin with the raw amino-acid sequence, 160 residues long: Phosphopantetheine adenylyltransferase (160 aa).

Residue threonine 11 participates in substrate binding. Residues 11–12 (TF) and histidine 19 contribute to the ATP site. Residues lysine 43, threonine 75, and arginine 89 each coordinate substrate. Residues 90–92 (GLR), glutamate 100, and 125–131 (YSFLSSS) contribute to the ATP site.

Belongs to the bacterial CoaD family. As to quaternary structure, homohexamer. It depends on Mg(2+) as a cofactor.

The protein localises to the cytoplasm. The enzyme catalyses (R)-4'-phosphopantetheine + ATP + H(+) = 3'-dephospho-CoA + diphosphate. It participates in cofactor biosynthesis; coenzyme A biosynthesis; CoA from (R)-pantothenate: step 4/5. Functionally, reversibly transfers an adenylyl group from ATP to 4'-phosphopantetheine, yielding dephospho-CoA (dPCoA) and pyrophosphate. This chain is Phosphopantetheine adenylyltransferase, found in Listeria monocytogenes serovar 1/2a (strain ATCC BAA-679 / EGD-e).